A 396-amino-acid polypeptide reads, in one-letter code: Obg-like ATPase 1 (396 aa).

An OBG-type G domain is found at 23–283; sequence LKIGIVGLPN…LSAEERQKYL (261 aa). 32–37 lines the ATP pocket; it reads NVGKST. Residues Ser36 and Thr56 each contribute to the Mg(2+) site. ATP is bound at residue Leu231. Positions 267–274 match the Nuclear export signal motif; it reads LELRLQEL. At Lys294 the chain carries N6-acetyllysine. The 84-residue stretch at 304 to 387 folds into the TGS domain; the sequence is QLEYFFTAGP…EDGDIIFFKF (84 aa).

This sequence belongs to the TRAFAC class OBG-HflX-like GTPase superfamily. OBG GTPase family. YchF/OLA1 subfamily. As to quaternary structure, monomer. Mg(2+) is required as a cofactor.

It localises to the cytoplasm. The protein localises to the nucleus. It is found in the nucleolus. Its function is as follows. Hydrolyzes ATP, and can also hydrolyze GTP with lower efficiency. Has lower affinity for GTP. In Bos taurus (Bovine), this protein is Obg-like ATPase 1.